The sequence spans 765 residues: Transcription factor SKN7 (765 aa).

The segment at 1-42 (MPPTNGEGGSQQPQQQQQQQQQQQQQQQQQQQQQQGGSGSSD) is disordered. Positions 11–35 (QQPQQQQQQQQQQQQQQQQQQQQQQ) are enriched in low complexity. Residues 40-145 (SSDFVRKLYK…NLDNIRRKAP (106 aa)) are DNA-binding domain. Positions 157-198 (FNASQQQIAALSESLQATQQQLQALQQQCYELEKTNRLLVSE) form a coiled coil. The segment at 160-220 (SQQQIAALSE…QASNEIINHL (61 aa)) is hydrophobic repeat HR-A/B. A disordered region spans residues 371–391 (SSSQITPSQITPPPKDQMSSM). The 117-residue stretch at 398-514 (RVLLVEDDKT…NMSRLLRRHL (117 aa)) folds into the Response regulatory domain. Residue Asp449 is modified to 4-aspartylphosphate. Positions 542–765 (TAGPATTGVG…PGVGVAGFVQ (224 aa)) are transactivation domain. Positions 550-564 (VGVGVAGAPSGGAHG) are enriched in gly residues. Disordered regions lie at residues 550–647 (VGVG…PAGL) and 686–765 (PGAM…GFVQ). A compositionally biased stretch (low complexity) spans 569–584 (AQHQQGYAMAPPTTMQ). The span at 626-636 (QPPPPPTPTQP) shows a compositional bias: pro residues. Composition is skewed to low complexity over residues 637–647 (SPTSAAPPAGL) and 699–715 (GVGH…AGAR). Residues 755-765 (HPGVGVAGFVQ) are compositionally biased toward gly residues.

Belongs to the SKN7 family. As to quaternary structure, homotrimer.

Its subcellular location is the nucleus. Its function is as follows. Transcription factor that is part of a SLN1-YPD1-SKN7 two-component regulatory system, which controls gene expression in response to changes in the osmolarity of the extracellular environment. Under low osmotic conditions, phosphorylated and activated by the phosphorelay intermediate protein YPD1. Also activated in response to oxidative stress, independent on the two-component regulatory system. Regulates heat shock genes in response to oxidative stress and genes involved in cell wall integrity in response to osmotic changes. This Chaetomium thermophilum (strain DSM 1495 / CBS 144.50 / IMI 039719) (Thermochaetoides thermophila) protein is Transcription factor SKN7.